Here is a 154-residue protein sequence, read N- to C-terminus: Myoglobin (154 aa).

One can recognise a Globin domain in the interval 2–148; it reads GLSDGEWQLV…FRNDIAAKYK (147 aa). S4 carries the post-translational modification Phosphoserine. H65 contacts nitrite. H65 contributes to the O2 binding site. Phosphothreonine is present on T68. H94 contacts heme b.

The protein belongs to the globin family. Monomeric.

The protein resides in the cytoplasm. It is found in the sarcoplasm. It catalyses the reaction Fe(III)-heme b-[protein] + nitric oxide + H2O = Fe(II)-heme b-[protein] + nitrite + 2 H(+). It carries out the reaction H2O2 + AH2 = A + 2 H2O. In terms of biological role, monomeric heme protein which primary function is to store oxygen and facilitate its diffusion within muscle tissues. Reversibly binds oxygen through a pentacoordinated heme iron and enables its timely and efficient release as needed during periods of heightened demand. Depending on the oxidative conditions of tissues and cells, and in addition to its ability to bind oxygen, it also has a nitrite reductase activity whereby it regulates the production of bioactive nitric oxide. Under stress conditions, like hypoxia and anoxia, it also protects cells against reactive oxygen species thanks to its pseudoperoxidase activity. This Ondatra zibethicus (Muskrat) protein is Myoglobin (MB).